A 942-amino-acid chain; its full sequence is Lambda-carrageenase (942 aa).

Positions M1–A25 are cleaved as a signal peptide.

Monomer.

The protein resides in the secreted. The catalysed reaction is Endohydrolysis of (1-&gt;4)-beta-linkages in the backbone of lambda-carrageenan, resulting in the tetrasaccharide alpha-D-Galp2,6S2-(1-&gt;3)-beta-D-Galp2S-(1-&gt;4)-alpha-D-Galp2,6S2-(1-&gt;3)-D-Galp2S.. In terms of biological role, hydrolyzes lambda-carrageenan with inversion of anomeric configuration. Does not hydrolyze iota- and kappa-carrageenans, agarose or porphyran. This is Lambda-carrageenase from Pseudoalteromonas carrageenovora (Alteromonas carrageenovora).